The following is a 926-amino-acid chain: Storkhead-box protein 2 (926 aa).

Disordered regions lie at residues 1-32 (MKKTRSTTLRRAWPSSDFSDRASDRMRSRSEK), 338-391 (EEEK…HLDI), 452-529 (EMPF…SYID), 564-588 (KEPSSACSLLEPGKPPESLPSYGEL), 632-672 (GVKK…GGVA), 724-803 (LKSH…GTMQ), and 825-926 (LAPK…VTSV). A compositionally biased stretch (basic and acidic residues) spans 18-32 (FSDRASDRMRSRSEK). Basic residues predominate over residues 353–378 (HSGRSKKSRTHRKSHGKSRSHSKTRV). The segment covering 379-391 (SKGDPSDGSHLDI) has biased composition (basic and acidic residues). Residues 463 to 472 (SHSKVHRSHS) show a composition bias toward basic residues. The span at 473-495 (HTQDRRSRNERSNKAKERSRSMD) shows a compositional bias: basic and acidic residues. Over residues 518–529 (QDDQTPSQSYID) the composition is skewed to polar residues. Over residues 632–658 (GVKKLSPSDRQVPHSSREPVGHKEESP) the composition is skewed to basic and acidic residues. A compositionally biased stretch (polar residues) spans 746 to 769 (LGTSAAQAMPASQRQQESGGNQEA). Over residues 785–799 (GANKNTEEEKNREDV) the composition is skewed to basic and acidic residues. 2 stretches are compositionally biased toward polar residues: residues 847–884 (MDSSSITVDSGFNSPRTRESLASNTSSIVESNRRQNPA) and 914–926 (KPSNCLQASVTSV).

The sequence is that of Storkhead-box protein 2 (STOX2) from Homo sapiens (Human).